The primary structure comprises 229 residues: Geodin cluster transcription factor (229 aa).

The segment at residues 12 to 39 (CHACAASKVRCSKEKPTCSRCSKRGTTC) is a DNA-binding region (zn(2)-C6 fungal-type). Disordered regions lie at residues 50 to 100 (KQLN…PGTT) and 141 to 169 (TANSEPLDAEGGITSSHNTSSNSPARPPT). 2 stretches are compositionally biased toward polar residues: residues 51-71 (QLNNRSTAKESSNTTRTSLAT) and 153-164 (ITSSHNTSSNSP).

Its subcellular location is the nucleus. In terms of biological role, transcription factor that regulates the expression of the gene cluster that mediates the biosynthesis of geodin, an intermediate in the biosynthesis of other natural products. This Aspergillus terreus (strain NIH 2624 / FGSC A1156) protein is Geodin cluster transcription factor.